Reading from the N-terminus, the 253-residue chain is MGQCGITSSKTVLVFLNLIFWGAAGILCYVGAYVFITYDDYDHFFEDVYTLIPAVVIIAVGALLFIIGLIGCCATIRESRCGLATFVIILLLVFVTEVVVVVLGYVYRAKVENEVDRSIQKVYKTYNGTNPDAASRAIDYVQRQLHCCGIHNYSDWENTDWFKETKNQSVPLSCCRETASNCNGSLAHPSDLYAEGCEALVVKKLQEIMMHVIWAALAFAAIQLLGMLCACIVLCRRSRDPAYELLITGGTYA.

The Cytoplasmic portion of the chain corresponds to Met1–Thr11. The helical transmembrane segment at Val12–Ala32 threads the bilayer. The Extracellular segment spans residues Tyr33–Thr50. Residues Leu51–Gly71 form a helical membrane-spanning segment. Residues Cys72–Thr85 lie on the Cytoplasmic side of the membrane. Residues Phe86–Val106 traverse the membrane as a helical segment. Residues Tyr107–Val212 are Extracellular-facing. N-linked (GlcNAc...) asparagine glycosylation is found at Asn127, Asn152, Asn167, and Asn183. The chain crosses the membrane as a helical span at residues Ile213–Val233. Residues Leu234 to Ala253 lie on the Cytoplasmic side of the membrane.

Belongs to the tetraspanin (TM4SF) family. In terms of assembly, interacts with claudin-11/CLDN11 and integrins.

It is found in the membrane. In terms of biological role, regulates the proliferation and migration of oligodendrocytes, a process essential for normal myelination and repair. This is Tetraspanin-3 (TSPAN3) from Homo sapiens (Human).